The primary structure comprises 211 residues: MRFVLASASPARLSVLRSAGIDPLVRVSGVDEDAVAAGLTDPTPPELVTALAAAKAEAVLPAVAAEAPDAVVVGCDSMLSAPDGEIVGKPGTPQAAAERWRKAAGRSGELLTGHAVVVLRGGEVVARTQGHLATTVRFSEPTEAELDAYIATGEPLHVAGGFTLEGFGGWFIEGVDGDPSSVLGISLPLTRKLLAEVGVSVVTLWGPPVAR.

Asp76 serves as the catalytic Proton acceptor.

Belongs to the Maf family. The cofactor is a divalent metal cation.

It localises to the cytoplasm. The enzyme catalyses a ribonucleoside 5'-triphosphate + H2O = a ribonucleoside 5'-phosphate + diphosphate + H(+). It catalyses the reaction a 2'-deoxyribonucleoside 5'-triphosphate + H2O = a 2'-deoxyribonucleoside 5'-phosphate + diphosphate + H(+). In terms of biological role, nucleoside triphosphate pyrophosphatase. May have a dual role in cell division arrest and in preventing the incorporation of modified nucleotides into cellular nucleic acids. The polypeptide is Nucleoside triphosphate pyrophosphatase (Saccharopolyspora erythraea (strain ATCC 11635 / DSM 40517 / JCM 4748 / NBRC 13426 / NCIMB 8594 / NRRL 2338)).